The following is a 216-amino-acid chain: ATP phosphoribosyltransferase (216 aa).

The protein belongs to the ATP phosphoribosyltransferase family. Short subfamily. In terms of assembly, heteromultimer composed of HisG and HisZ subunits.

It localises to the cytoplasm. The enzyme catalyses 1-(5-phospho-beta-D-ribosyl)-ATP + diphosphate = 5-phospho-alpha-D-ribose 1-diphosphate + ATP. The protein operates within amino-acid biosynthesis; L-histidine biosynthesis; L-histidine from 5-phospho-alpha-D-ribose 1-diphosphate: step 1/9. Its function is as follows. Catalyzes the condensation of ATP and 5-phosphoribose 1-diphosphate to form N'-(5'-phosphoribosyl)-ATP (PR-ATP). Has a crucial role in the pathway because the rate of histidine biosynthesis seems to be controlled primarily by regulation of HisG enzymatic activity. In Rubrobacter xylanophilus (strain DSM 9941 / JCM 11954 / NBRC 16129 / PRD-1), this protein is ATP phosphoribosyltransferase.